A 313-amino-acid chain; its full sequence is UDP-N-acetylglucosamine 3-dehydrogenase (313 aa).

Residues histidine 13, leucine 14, and arginine 38 each contribute to the NAD(+) site.

The protein belongs to the Gfo/Idh/MocA family. Exists in multiple oligomeric states.

It carries out the reaction UDP-N-acetyl-alpha-D-glucosamine + NAD(+) = UDP-2-acetamido-3-dehydro-2-deoxy-alpha-D-glucopyranose + NADH + H(+). It participates in bacterial outer membrane biogenesis; LPS lipid A biosynthesis. Functionally, oxidoreductase involved in the synthesis of 2,3-diamino-2,3-dideoxy-D-glucopyranose (GlcN3N), which is a component of lipid A in some species. Catalyzes the NAD(+)-dependent oxidation of the glucosamine 3-position of UDP-N-acetyl-glucosamine (UDP-GlcNAc) to a ketone moiety, forming UDP-2-acetamido-3-dehydro-2-deoxy-alpha-D-glucopyranose (UDP-3-oxo-GlcNAc). Is specific for UDP-GlcNAc, no activity is observed with UDP-glucose (UDP-Glc), UDP-glucoronic acid (UDP-GlcA), UDP-galactose (UDP-Gal) and UDP-N-acetylgalactosamine (UDP-GalNAc). Cannot use FAD(+) and NADP(+). This is UDP-N-acetylglucosamine 3-dehydrogenase from Acidithiobacillus ferrooxidans (strain ATCC 23270 / DSM 14882 / CIP 104768 / NCIMB 8455) (Ferrobacillus ferrooxidans (strain ATCC 23270)).